We begin with the raw amino-acid sequence, 507 residues long: Sugar transport protein 6 (507 aa).

Residues 1–20 (MAVVVSNANAPAFEAKMTVY) are Cytoplasmic-facing. Transmembrane regions (helical) follow at residues 21-41 (VFIC…DIGI), 78-98 (FLQL…FVAS), 115-135 (IFFL…MLII), 138-158 (LFLG…LSEI), 165-185 (GGLN…ANIV), 199-219 (IALG…LLII), 280-300 (FIIG…AIMF), 318-338 (LSAV…IYLV), 345-365 (FLLL…GIIL), 381-401 (LVVV…WGPL), 418-438 (GFAV…QAFL), and 447-467 (GIFF…FFFI). Residues 468–507 (PETKGIAIDDMRESVWKPHWFWKRYMLPEDDHHDIEKRNA) are Cytoplasmic-facing.

This sequence belongs to the major facilitator superfamily. Sugar transporter (TC 2.A.1.1) family. As to expression, pollen specific.

The protein localises to the membrane. With respect to regulation, inhibited by uncouplers such as 2,4-dinitrophenol and carbonyl cyanide-m-chlorophenyl-hydrazone. Functionally, mediates an active uptake of hexoses, probably by sugar/hydrogen symport. Can transport glucose, 3-O-methylglucose, mannose, fructose and galactose, and, to a lower extent, xylose and ribulose. The sequence is that of Sugar transport protein 6 (STP6) from Arabidopsis thaliana (Mouse-ear cress).